Consider the following 158-residue polypeptide: Rhombotin-2 (158 aa).

2 consecutive LIM zinc-binding domains span residues Cys30–Gly89 and Cys94–Lys153.

In terms of assembly, interacts via its LIM domains with ELF2 and LDB1. Also interacts with basic helix-loop-helix protein TAL1/SCL and can assemble in a complex with LMO2 and TAL1/SCL. Interacts with BEX2 and KDM5A.

It is found in the nucleus. Functionally, acts with TAL1/SCL to regulate red blood cell development. Also acts with LDB1 to maintain erythroid precursors in an immature state. The polypeptide is Rhombotin-2 (LMO2) (Homo sapiens (Human)).